We begin with the raw amino-acid sequence, 124 residues long: Astakine (124 aa).

The signal sequence occupies residues 1–21; sequence MAVSSAVRMLSVACLVVSAAG. Cystine bridges form between cysteine 28-cysteine 40, cysteine 34-cysteine 52, cysteine 39-cysteine 91, cysteine 62-cysteine 99, and cysteine 93-cysteine 106.

The protein belongs to the AVIT (prokineticin) family.

The protein localises to the secreted. Its function is as follows. Cytokine directly involved in hematopoiesis. This chain is Astakine, found in Penaeus monodon (Giant tiger prawn).